A 301-amino-acid polypeptide reads, in one-letter code: Enolase-phosphatase E1 (301 aa).

The Mg(2+) site is built by aspartate 22 and glutamate 24. Substrate-binding positions include serine 163–serine 164 and lysine 197. Residue aspartate 222 coordinates Mg(2+). A disordered region spans residues alanine 273–phenylalanine 301.

This sequence belongs to the HAD-like hydrolase superfamily. MasA/MtnC family. In terms of assembly, monomer. Mg(2+) is required as a cofactor.

Its subcellular location is the cytoplasm. The protein resides in the nucleus. It catalyses the reaction 5-methylsulfanyl-2,3-dioxopentyl phosphate + H2O = 1,2-dihydroxy-5-(methylsulfanyl)pent-1-en-3-one + phosphate. Its pathway is amino-acid biosynthesis; L-methionine biosynthesis via salvage pathway; L-methionine from S-methyl-5-thio-alpha-D-ribose 1-phosphate: step 3/6. It participates in amino-acid biosynthesis; L-methionine biosynthesis via salvage pathway; L-methionine from S-methyl-5-thio-alpha-D-ribose 1-phosphate: step 4/6. In terms of biological role, bifunctional enzyme that catalyzes the enolization of 2,3-diketo-5-methylthiopentyl-1-phosphate (DK-MTP-1-P) into the intermediate 2-hydroxy-3-keto-5-methylthiopentenyl-1-phosphate (HK-MTPenyl-1-P), which is then dephosphorylated to form the acireductone 1,2-dihydroxy-3-keto-5-methylthiopentene (DHK-MTPene). This is Enolase-phosphatase E1 from Monosiga brevicollis (Choanoflagellate).